The primary structure comprises 235 residues: MSTESMIRDVELAEEALPKKAWGPQNSSRCLCLSLFSFLLVAGATTLFCLLNFGVIGPQREEKFPNNLPIIGSMAQTLTLRSSSQNSSDKPVAHVVANHQVDEQLEWLSRGANALLANGMDLKDNQLVIPADGLYLVYSQVLFKGQGCSSYVLLTHTVSRFAVSYEDKVNLLSAIKSPCPKETPEGSELKPWYEPIYLGGVFQLEKGDRLSAEVNLPKYLDFAESGQVYFGVIAL.

The Cytoplasmic portion of the chain corresponds to 1–35; the sequence is MSTESMIRDVELAEEALPKKAWGPQNSSRCLCLSL. Position 2 is a phosphoserine; by CK1 (Ser-2). Residues Lys-19 and Lys-20 are each lipidated (N6-myristoyl lysine). A helical; Signal-anchor for type II membrane protein membrane pass occupies residues 36–56; sequence FSFLLVAGATTLFCLLNFGVI. The Extracellular segment spans residues 57 to 235; that stretch reads GPQREEKFPN…GQVYFGVIAL (179 aa). Residue Ser-83 is glycosylated (O-linked (GalNAc...) serine; in soluble form). The N-linked (GlcNAc...) asparagine glycan is linked to Asn-86. The THD domain occupies 91 to 235; it reads PVAHVVANHQ…GQVYFGVIAL (145 aa). Cys-148 and Cys-179 are oxidised to a cystine.

Belongs to the tumor necrosis factor family. As to quaternary structure, homotrimer. Interacts with SPPL2B. The soluble form derives from the membrane form by proteolytic processing. The membrane-bound form is further proteolytically processed by SPPL2A or SPPL2B through regulated intramembrane proteolysis producing TNF intracellular domains (ICD1 and ICD2) released in the cytosol and TNF C-domain 1 and C-domain 2 secreted into the extracellular space. Post-translationally, the membrane form, but not the soluble form, is phosphorylated on serine residues. Dephosphorylation of the membrane form occurs by binding to soluble TNFRSF1A/TNFR1. In terms of processing, O-glycosylated; glycans contain galactose, N-acetylgalactosamine and N-acetylneuraminic acid. The soluble form is demyristoylated by SIRT6, promoting its secretion.

It is found in the cell membrane. The protein resides in the membrane. The protein localises to the secreted. Functionally, cytokine that binds to TNFRSF1A/TNFR1 and TNFRSF1B/TNFBR. It is mainly secreted by macrophages and can induce cell death of certain tumor cell lines. It is potent pyrogen causing fever by direct action or by stimulation of interleukin-1 secretion and is implicated in the induction of cachexia, Under certain conditions it can stimulate cell proliferation and induce cell differentiation. Induces insulin resistance in adipocytes via inhibition of insulin-induced IRS1 tyrosine phosphorylation and insulin-induced glucose uptake. Induces GKAP42 protein degradation in adipocytes which is partially responsible for TNF-induced insulin resistance. Plays a role in angiogenesis by inducing VEGF production synergistically with IL1B and IL6. Promotes osteoclastogenesis and therefore mediates bone resorption. The TNF intracellular domain (ICD) form induces IL12 production in dendritic cells. The protein is Tumor necrosis factor (TNF) of Peromyscus leucopus (White-footed mouse).